Reading from the N-terminus, the 282-residue chain is Undecaprenyl-diphosphatase (282 aa).

Transmembrane regions (helical) follow at residues 40 to 60 (GAAF…IYFY), 87 to 107 (MGWM…LFKT), 116 to 136 (LYWI…AEWL), 153 to 173 (IGWK…IPGS), 196 to 216 (FSFL…LYET), 229 to 249 (NLAV…AFLI), and 256 to 276 (STAL…GLIA).

It belongs to the UppP family.

It is found in the cell inner membrane. It catalyses the reaction di-trans,octa-cis-undecaprenyl diphosphate + H2O = di-trans,octa-cis-undecaprenyl phosphate + phosphate + H(+). Functionally, catalyzes the dephosphorylation of undecaprenyl diphosphate (UPP). Confers resistance to bacitracin. This is Undecaprenyl-diphosphatase from Chlorobium phaeobacteroides (strain BS1).